A 44-amino-acid polypeptide reads, in one-letter code: MRQTFQPSRIVRKRRHGFRTRMSTRMGRKILNRRRTQGRRVLCA.

Belongs to the bacterial ribosomal protein bL34 family.

In Ehrlichia ruminantium (strain Gardel), this protein is Large ribosomal subunit protein bL34.